The following is a 245-amino-acid chain: MLSFLNLNKDSKPFAKIAGGKFKGKKAYVNEESDKGKNELVVPEGKFVPYPNPMYREVIYIAGQSGSGKSTYAAQYIYHYKKLFPKNKVFVFSRLKMAEILVSLGCIEIPIDDELQDMDAIRDIKDALCLFDDIDTIKEKHLRNTVYDIQNDILETGRHNNIYIIVTSHLINGNDKKNTRTILNEAHKVTFFPKSGAYGITYFLKNYIGLPKKQIDNVLEIKSRWITINKGYPLFIFYENGAKTL.

This is an uncharacterized protein from Acanthamoeba polyphaga (Amoeba).